A 272-amino-acid polypeptide reads, in one-letter code: Glutamate racemase (272 aa).

Substrate-binding positions include 12–13 (DS) and 44–45 (YG). Residue C75 is the Proton donor/acceptor of the active site. 76–77 (NT) contributes to the substrate binding site. Catalysis depends on C185, which acts as the Proton donor/acceptor. 186–187 (TH) provides a ligand contact to substrate.

This sequence belongs to the aspartate/glutamate racemases family.

The catalysed reaction is L-glutamate = D-glutamate. It functions in the pathway cell wall biogenesis; peptidoglycan biosynthesis. Provides the (R)-glutamate required for cell wall biosynthesis. The sequence is that of Glutamate racemase from Mycobacterium leprae (strain TN).